A 341-amino-acid polypeptide reads, in one-letter code: GTPase Obg (341 aa).

Residues 1–159 (MKFVDEALIK…RNLRLELRVL (159 aa)) enclose the Obg domain. Residues 128–150 (TRYKSSVNRSPRQTTPGSPGESR) form a disordered region. Residues 129-144 (RYKSSVNRSPRQTTPG) are compositionally biased toward polar residues. The OBG-type G domain maps to 160–334 (ADVGLLGLPN…LCYALMQLID (175 aa)). GTP is bound by residues 166 to 173 (GLPNAGKS), 191 to 195 (FTTLH), 213 to 216 (DIPG), 283 to 286 (NKID), and 315 to 317 (SAI). S173 and T193 together coordinate Mg(2+).

This sequence belongs to the TRAFAC class OBG-HflX-like GTPase superfamily. OBG GTPase family. In terms of assembly, monomer. Mg(2+) serves as cofactor.

It is found in the cytoplasm. Its function is as follows. An essential GTPase which binds GTP, GDP and possibly (p)ppGpp with moderate affinity, with high nucleotide exchange rates and a fairly low GTP hydrolysis rate. Plays a role in control of the cell cycle, stress response, ribosome biogenesis and in those bacteria that undergo differentiation, in morphogenesis control. This chain is GTPase Obg, found in Legionella pneumophila (strain Lens).